The following is a 302-amino-acid chain: GTPase Era (302 aa).

An Era-type G domain is found at 10–178; the sequence is RCGYVAIVGR…EAQIAKHLPE (169 aa). The segment at 18–25 is G1; the sequence is GRPNVGKS. 18–25 is a GTP binding site; it reads GRPNVGKS. Positions 44–48 are G2; it reads QTTRH. Residues 65-68 form a G3 region; the sequence is DTPG. Residues 65–69 and 127–130 each bind GTP; these read DTPGM and NKTD. A G4 region spans residues 127–130; it reads NKTD. A G5 region spans residues 157 to 159; that stretch reads ISA. The KH type-2 domain occupies 201-285; sequence VREKIMRQLG…MLNLWVKVKG (85 aa).

The protein belongs to the TRAFAC class TrmE-Era-EngA-EngB-Septin-like GTPase superfamily. Era GTPase family. As to quaternary structure, monomer.

It localises to the cytoplasm. Its subcellular location is the cell inner membrane. Functionally, an essential GTPase that binds both GDP and GTP, with rapid nucleotide exchange. Plays a role in 16S rRNA processing and 30S ribosomal subunit biogenesis and possibly also in cell cycle regulation and energy metabolism. The sequence is that of GTPase Era from Pseudomonas putida (strain ATCC 47054 / DSM 6125 / CFBP 8728 / NCIMB 11950 / KT2440).